A 220-amino-acid polypeptide reads, in one-letter code: Cytidylate kinase (220 aa).

ATP is bound at residue 10 to 18 (GPASSGKST).

Belongs to the cytidylate kinase family. Type 1 subfamily.

Its subcellular location is the cytoplasm. The catalysed reaction is CMP + ATP = CDP + ADP. It catalyses the reaction dCMP + ATP = dCDP + ADP. The chain is Cytidylate kinase from Lactococcus lactis subsp. cremoris (strain SK11).